Here is a 427-residue protein sequence, read N- to C-terminus: UPF0415 protein C7orf25 homolog (427 aa).

Positions 200–234 (GGEEEDEEDQEGDHEDLVEEEEDGEDDNDDDSDDT) are enriched in acidic residues. A disordered region spans residues 200–236 (GGEEEDEEDQEGDHEDLVEEEEDGEDDNDDDSDDTDL).

Belongs to the UPF0415 family.

The sequence is that of UPF0415 protein C7orf25 homolog from Danio rerio (Zebrafish).